A 166-amino-acid chain; its full sequence is Protein-export protein SecB (166 aa).

The protein belongs to the SecB family. Homotetramer, a dimer of dimers. One homotetramer interacts with 1 SecA dimer.

Its subcellular location is the cytoplasm. In terms of biological role, one of the proteins required for the normal export of preproteins out of the cell cytoplasm. It is a molecular chaperone that binds to a subset of precursor proteins, maintaining them in a translocation-competent state. It also specifically binds to its receptor SecA. The polypeptide is Protein-export protein SecB (Roseobacter denitrificans (strain ATCC 33942 / OCh 114) (Erythrobacter sp. (strain OCh 114))).